Consider the following 480-residue polypeptide: Dimethyl-sulfide monooxygenase (480 aa).

Positions 58, 104, 154, 158, and 230 each coordinate FMN. The segment at 423–480 is disordered; it reads QDSYKPGSLRRKLIGTNDGRVESTHPAAQYRDAYVGKESVADRTQPSPFANAKAPVAE.

This sequence belongs to the NtaA/SnaA/DszA monooxygenase family. Heterodimer of 2 subunits, DmoA and DmoB. FMN serves as cofactor.

It catalyses the reaction dimethyl sulfide + NADH + O2 + H(+) = methanethiol + formaldehyde + NAD(+) + H2O. With respect to regulation, inhibited by umbelliferone, 8-anilinonaphthalenesulfonate, a range of metal-chelating agents, and Hg(2+), Cd(2+) and Pb(2+) ions. Functionally, monooxygenase that mediates oxidation of dimethyl sulfide, the first step in dimethyl sulfide degradation pathway. Has much lower activity with diethyl sulfide and other short-chain alkyl methyl sulfides. The chain is Dimethyl-sulfide monooxygenase (dmoA) from Hyphomicrobium sulfonivorans.